Consider the following 577-residue polypeptide: Optineurin (577 aa).

2 disordered regions span residues 1–32 (MSHQ…HPNL) and 101–143 (SHEN…KDQL). Residues 38 to 170 (EELLQQMKEL…VSELQLKLNS (133 aa)) adopt a coiled-coil conformation. Positions 58 to 209 (MKLNNQAMKG…GPTRTVSTGT (152 aa)) are interaction with Rab8. Positions 176 to 181 (DSFVEI) match the LIR motif. At Ser177 the chain carries Phosphoserine; by TBK1. Basic and acidic residues predominate over residues 186–197 (GEAEGSVKEIKH). Disordered stretches follow at residues 186–209 (GEAE…STGT) and 261–297 (VSDF…TVGS). Residue Ser198 is modified to Phosphoserine. Residues 239–508 (CLREGNQKVE…LLKENDAFED (270 aa)) are a coiled coil. Composition is skewed to basic and acidic residues over residues 261-274 (VSDF…RSEI) and 281-292 (STEKENDEEKGP). Phosphoserine is present on Ser342. The interaction with HD stretch occupies residues 411 to 577 (TRKESEKVDR…LQIHVMDCII (167 aa)). The tract at residues 412-520 (RKESEKVDRA…RQSLMEMQSR (109 aa)) is interaction with MYO6. The UBAN motif lies at 474–479 (DFHAER). Ser526 is subject to Phosphoserine. The segment at 547-577 (QRNIPIHSCPKCGEVLPDIDTLQIHVMDCII) adopts a CCHC NOA-type zinc-finger fold. 4 residues coordinate Zn(2+): Cys555, Cys558, His571, and Cys575.

In terms of assembly, self-associates. Interacts with HD. Interacts with GTF3A. Interacts with MYO6. Interacts (via UBAN) with ubiquitinated TFRC. Interacts with GTP-bound Rab8 (RAB8A and/or RAB8B). Interacts with TBC1D17. Interacts with TBK1. Interacts with TRAF3. Binds to linear ubiquitin chains. Interacts with LC3 family members MAP1LC3A, MAP1LC3B, GABARAP, GABARAPL1 and GABARAPL2; OPTN phosphorylation increases the association (at least with MAP1LC3B). Interacts with RAB12; the interaction may be indirect. Interacts with TBK1; this interaction leads to the Golgi localization of TBK1 and its subsequent activation. Interacts with palmitoyltransferase ZDHHC17/HIP14; the interaction does not lead to palmitoylation of OPTN. Interacts with CYLD. Interacts with TOM1; the interaction is indirect and is mediated by MYO6, which acts as a bridge between TOM1 and OPTN. Interacts with USP12; the interaction is independent of USP12 deubiquitinase activity and may be involved in regulation of autophagic flux. As to quaternary structure, (Microbial infection) Interacts with E3 14.7 kDa protein of group C human adenovirus. Interacts with Bluetongue virus protein NS3. Post-translationally, phosphorylated by TBK1, leading to restrict bacterial proliferation in case of infection. Phosphorylation is induced by phorbol esters and decreases its half-time. As to expression, present in aqueous humor of the eye (at protein level). Expressed in the trabecular meshwork (at protein level). Expressed in nonpigmented ciliary epithelium (at protein level). Expressed at high levels in skeletal muscle, also detected in heart, brain, pancreas, kidney, placenta and liver. Expressed in dermal fibroblasts (at protein level).

The protein resides in the cytoplasm. It localises to the perinuclear region. The protein localises to the golgi apparatus. It is found in the trans-Golgi network. Its subcellular location is the cytoplasmic vesicle. The protein resides in the autophagosome. It localises to the recycling endosome. Its function is as follows. Plays an important role in the maintenance of the Golgi complex, in membrane trafficking, in exocytosis, through its interaction with myosin VI and Rab8. Links myosin VI to the Golgi complex and plays an important role in Golgi ribbon formation. Plays a role in the activation of innate immune response during viral infection. Mechanistically, recruits TBK1 at the Golgi apparatus, promoting its trans-phosphorylation after RLR or TLR3 stimulation. In turn, activated TBK1 phosphorylates its downstream partner IRF3 to produce IFN-beta/IFNB1. Plays a neuroprotective role in the eye and optic nerve. May act by regulating membrane trafficking and cellular morphogenesis via a complex that contains Rab8 and huntingtin (HD). Mediates the interaction of Rab8 with the probable GTPase-activating protein TBC1D17 during Rab8-mediated endocytic trafficking, such as that of transferrin receptor (TFRC/TfR); regulates Rab8 recruitment to tubules emanating from the endocytic recycling compartment. Autophagy receptor that interacts directly with both the cargo to become degraded and an autophagy modifier of the MAP1 LC3 family; targets ubiquitin-coated bacteria (xenophagy), such as cytoplasmic Salmonella enterica, and appears to function in the same pathway as SQSTM1 and CALCOCO2/NDP52. In terms of biological role, (Microbial infection) May constitute a cellular target for various viruses, such as adenovirus E3 14.7 or Bluetongue virus, to inhibit innate immune response. During RNA virus infection, such as that of Sendai virus, negatively regulates the induction of IFNB1. This Homo sapiens (Human) protein is Optineurin (OPTN).